The chain runs to 595 residues: Protein UL31 (595 aa).

The first 23 residues, 1–23 (MGDKPTLVTLLTVAVSSPPPSSP), serve as a signal peptide directing secretion. The tract at residues 47-94 (TATSEVGEKTAEQEVAAADPETGNERRENRENEGGETRTTGTTAVKRS) is disordered. The span at 69-82 (GNERRENRENEGGE) shows a compositional bias: basic and acidic residues. 2 N-linked (GlcNAc...) asparagine; by host glycosylation sites follow: asparagine 176 and asparagine 197.

This sequence belongs to the herpesviridae U10 family. Interacts with host CGAS.

It is found in the host cytoplasm. The protein localises to the host nucleus. Functionally, plays a role in the inhibition of host innate immune system by targeting host CGAS and promoting dissociation of DNA from CGAS, thereby inhibiting the enzymatic activity of CGAS. This is Protein UL31 from Homo sapiens (Human).